The following is a 442-amino-acid chain: 5-methylthioadenosine/S-adenosylhomocysteine deaminase (442 aa).

Residues His-70 and His-72 each coordinate Zn(2+). The substrate site is built by Glu-99 and His-191. Residue His-218 participates in Zn(2+) binding. Substrate is bound by residues Glu-221 and Asp-306. Zn(2+) is bound at residue Asp-306.

Belongs to the metallo-dependent hydrolases superfamily. MTA/SAH deaminase family. Zn(2+) serves as cofactor.

It catalyses the reaction S-adenosyl-L-homocysteine + H2O + H(+) = S-inosyl-L-homocysteine + NH4(+). It carries out the reaction S-methyl-5'-thioadenosine + H2O + H(+) = S-methyl-5'-thioinosine + NH4(+). Its function is as follows. Catalyzes the deamination of 5-methylthioadenosine and S-adenosyl-L-homocysteine into 5-methylthioinosine and S-inosyl-L-homocysteine, respectively. Is also able to deaminate adenosine. This Nitratidesulfovibrio vulgaris (strain DP4) (Desulfovibrio vulgaris) protein is 5-methylthioadenosine/S-adenosylhomocysteine deaminase.